A 67-amino-acid polypeptide reads, in one-letter code: MAKTDDFKAKTDDQLAEQLGELKREAFNLRFQAATGQLEKASRVKEVRRSIARIKTVQTERARSAAK.

This sequence belongs to the universal ribosomal protein uL29 family.

This is Large ribosomal subunit protein uL29 from Sphingopyxis alaskensis (strain DSM 13593 / LMG 18877 / RB2256) (Sphingomonas alaskensis).